Here is a 344-residue protein sequence, read N- to C-terminus: GTPase Obg (344 aa).

The Obg domain occupies 1–159 (MKFLDEAKVY…MWLILRLKLI (159 aa)). The OBG-type G domain occupies 160-327 (ADAGLVGLPN…ALRAIQAQLD (168 aa)). Residues 166 to 173 (GLPNAGKS), 191 to 195 (FTTLH), 212 to 215 (DIPG), 279 to 282 (SKAD), and 308 to 310 (SAA) each bind GTP. 2 residues coordinate Mg(2+): serine 173 and threonine 193.

The protein belongs to the TRAFAC class OBG-HflX-like GTPase superfamily. OBG GTPase family. Monomer. Requires Mg(2+) as cofactor.

It is found in the cytoplasm. In terms of biological role, an essential GTPase which binds GTP, GDP and possibly (p)ppGpp with moderate affinity, with high nucleotide exchange rates and a fairly low GTP hydrolysis rate. Plays a role in control of the cell cycle, stress response, ribosome biogenesis and in those bacteria that undergo differentiation, in morphogenesis control. This Methylorubrum extorquens (strain CM4 / NCIMB 13688) (Methylobacterium extorquens) protein is GTPase Obg.